The primary structure comprises 158 residues: Urease accessory protein UreE (158 aa).

Positions Pro133–Asp158 are disordered. Positions His141 to Asp158 are enriched in basic and acidic residues.

It belongs to the UreE family.

Its subcellular location is the cytoplasm. Its function is as follows. Involved in urease metallocenter assembly. Binds nickel. Probably functions as a nickel donor during metallocenter assembly. This chain is Urease accessory protein UreE, found in Chelativorans sp. (strain BNC1).